The primary structure comprises 159 residues: Ribosomal RNA large subunit methyltransferase H (159 aa).

S-adenosyl-L-methionine contacts are provided by residues Leu-76, Gly-108, and 127-132 (FGLLTL).

It belongs to the RNA methyltransferase RlmH family. As to quaternary structure, homodimer.

It localises to the cytoplasm. The catalysed reaction is pseudouridine(1915) in 23S rRNA + S-adenosyl-L-methionine = N(3)-methylpseudouridine(1915) in 23S rRNA + S-adenosyl-L-homocysteine + H(+). Functionally, specifically methylates the pseudouridine at position 1915 (m3Psi1915) in 23S rRNA. In Streptococcus pyogenes serotype M18 (strain MGAS8232), this protein is Ribosomal RNA large subunit methyltransferase H.